A 1434-amino-acid polypeptide reads, in one-letter code: DNA-directed RNA polymerase subunit beta' (1434 aa).

Zn(2+) contacts are provided by Cys70, Cys72, Cys85, and Cys88. Asp460, Asp462, and Asp464 together coordinate Mg(2+). Cys840, Cys914, Cys921, and Cys924 together coordinate Zn(2+).

It belongs to the RNA polymerase beta' chain family. As to quaternary structure, the RNAP catalytic core consists of 2 alpha, 1 beta, 1 beta' and 1 omega subunit. When a sigma factor is associated with the core the holoenzyme is formed, which can initiate transcription. Mg(2+) is required as a cofactor. The cofactor is Zn(2+).

The enzyme catalyses RNA(n) + a ribonucleoside 5'-triphosphate = RNA(n+1) + diphosphate. In terms of biological role, DNA-dependent RNA polymerase catalyzes the transcription of DNA into RNA using the four ribonucleoside triphosphates as substrates. The protein is DNA-directed RNA polymerase subunit beta' of Tolumonas auensis (strain DSM 9187 / NBRC 110442 / TA 4).